Consider the following 398-residue polypeptide: Type III polyketide synthase pspB (398 aa).

CoA contacts are provided by residues K47 and 47 to 54; that span reads KLLQINRS. The active-site Nucleophile is C152. Residue 214 to 215 coordinates substrate; it reads SD. Residues L267, G321, 321 to 324, and A324 each bind CoA; that span reads GGEA.

This sequence belongs to the thiolase-like superfamily. Chalcone/stilbene synthases family. Homodimer.

It catalyses the reaction 11 malonyl-CoA + acetyl-CoA + S-adenosyl-L-methionine + 12 NADPH + 22 H(+) = soppiline B + S-adenosyl-L-homocysteine + 12 CO2 + 12 NADP(+) + 12 CoA + 8 H2O. Its pathway is secondary metabolite biosynthesis. Functionally, type III polyketide synthase; part of the gene cluster that mediates the biosynthesis of the alkylresorcinols called soppilines. The biosynthesis starts with the HR-PKS pspA-catalyzed carbon chain assembly through nine chain elongation cycles, using acetyl CoA and malonyl CoA as a starter and extender units, respectively, to produce the polyketide soppiline A. In the first round, the KR, DH, and CMeT domains work to produce 2-methyl-2-butenyl thioester. In rounds 2 to 5, the KR, DH, and ER domains fully catalyze the reduction of the elongated beta-ketothioester, resulting in the insertion of eight methylene units. The unusual Z,E,Z-triene motif is likely constructed during rounds 6 to 8. Typically, the DH domain introduces a double bond at an alpha,beta-position of an elongated polyketide chain, with the dehydration of a beta-hydroxy group. The last extension cycle would be carried out with L-oriented beta-ketoreduction by the KR domain to produce beta-hydroxy carboxylic acid soppiline A. The type III PKS pspB intercepts the elongated polyketide chain at round 8 from the HR-PKS pspA, followed by a tri-keto extension and decarboxylative aldol cyclization to produce 1,3,5-trisubstituted alkylresorcinol soppiline B. Subsequently, the cytochrome P450 monooxygenase pspC catalyzes three-step oxidations at the C-4 methyl group to carboxylic acid to yield soppiline C. This chain is Type III polyketide synthase pspB, found in Penicillium soppii.